The following is a 345-amino-acid chain: Low-density lipoprotein receptor class A domain-containing protein 3 (345 aa).

Residues Met-1–Ser-17 form the signal peptide. Residues Gln-18 to Thr-173 lie on the Extracellular side of the membrane. The N-linked (GlcNAc...) asparagine glycan is linked to Asn-24. LDL-receptor class A domains follow at residues Glu-28–Pro-65, Lys-70–Thr-107, and Leu-112–Glu-148. Disulfide bonds link Cys-29/Cys-42, Cys-37/Cys-55, Cys-49/Cys-64, Cys-71/Cys-84, Cys-78/Cys-97, Cys-91/Cys-106, Cys-113/Cys-125, Cys-120/Cys-138, and Cys-132/Cys-147. A (Microbial infection) Interaction with Venezuelan equine encephalitis virus/VEEV spike proteins E1 and E2 region spans residues Asn-30–Asp-57. The helical transmembrane segment at Tyr-174–Leu-194 threads the bilayer. Residues His-195 to Val-345 lie on the Cytoplasmic side of the membrane. Short sequence motifs (involved in ITCH interaction) lie at residues Pro-256–Tyr-259 and Pro-275–Tyr-278. The disordered stretch occupies residues Trp-270–Val-345. The segment covering Ser-295–Ser-313 has biased composition (low complexity).

The protein belongs to the LDLR family. In terms of assembly, interacts with APP precursor C-terminus. Interacts directly with ITCH; this interaction promotes ITCH auto-ubiquitination leading to its degradation. Interacts directly with NEDD4; this interaction promotes NEDD4 auto-ubiquitination. Interacts directly with NEDD4L. As to quaternary structure, (Microbial infection) Interacts (via domain LDL-receptor class A 1) with Venezuelan equine encephalitis virus/VEEV spike proteins E1 and E2. Expressed at high levels in brain, lung, skeletal muscle, and pancreas. Expressed at moderate levels in heart, placenta, and kidney but not detected in the liver.

It is found in the cell membrane. May influence APP processing, resulting in a decrease in sAPP-alpha production and increased amyloidogenic P3 peptide production. May regulate ITCH and NEDD4 E3 ligase activity and degradation. Its function is as follows. (Microbial infection) Acts as a receptor for Venezuelan equine encephalitis virus. This chain is Low-density lipoprotein receptor class A domain-containing protein 3, found in Homo sapiens (Human).